A 217-amino-acid chain; its full sequence is Insulin-like growth factor 2.L (217 aa).

Residues 1-56 (MEQLSCKHRSSSMEAEAQLCRQTESRSTQLPRMSVMRHLFLLSITFLVYTLDSAKA) form the signal peptide. Residues 57 to 83 (YRPTETLCGGELVDTLQFVCGDRGFYF) form a b region. Disulfide bonds link Cys-64-Cys-103, Cys-76-Cys-116, and Cys-102-Cys-107. Residues 84–96 (STNNGRSNRRSNR) form a c region. An a region spans residues 97-117 (GIVEECCFRSCDLELLETYCA). A d region spans residues 118 to 123 (KPSKNE). A propeptide spans 124–217 (RDVSTAPATA…LQQTSEPSHN (94 aa)) (e peptide).

The protein belongs to the insulin family.

The protein resides in the secreted. Its function is as follows. The insulin-like growth factors, isolated from plasma, are structurally and functionally related to insulin but have a much higher growth-promoting activity. Promotes anterior neural development. Acts as a ligand for integrin which is required for IGF2 signaling. In Xenopus laevis (African clawed frog), this protein is Insulin-like growth factor 2.L.